The primary structure comprises 691 residues: Ubiquitin-like domain-containing protein CIP73 (691 aa).

A Ubiquitin-like domain is found at 22 to 97 (IEIKIKMLDS…LHLVARHPDL (76 aa)). Disordered stretches follow at residues 92–118 (ARHPDLTPPGSLPNHSATEPNSSTGHG), 176–203 (TGLGRTSDFTGNPSRPQPEQAGFRISSD), 264–283 (RNEERGFVSSRLSSTPEGLS), 432–473 (ASTT…ASIA), 499–554 (SVNT…SSRV), 590–624 (EIHVEDPSSQGTTAGVTSAATSSGAAQAPEAEPNV), and 645–691 (HIGR…QKME). Polar residues-rich tracts occupy residues 104–118 (PNHSATEPNSSTGHG), 178–189 (LGRTSDFTGNPS), 273–283 (SRLSSTPEGLS), 446–465 (TQSASVQRNTGESSVNQTTS), and 499–523 (SVNTNNEQGSQPASQQHTAPHSTAE). Over residues 525 to 535 (TLHRQSMEDSA) the composition is skewed to basic and acidic residues. Residues 536–554 (RNGTLPTPNTQQEPSSSRV) show a composition bias toward polar residues. Over residues 597–617 (SSQGTTAGVTSAATSSGAAQA) the composition is skewed to low complexity.

As to quaternary structure, interacts with CCAMK. Phosphorylated at the N-terminus by CCAMK. In terms of tissue distribution, highly epressed in roots. Expressed at very low levels in leaves and stems.

It is found in the nucleus. Functionally, involved in root nodulation. Required for root nodule organogenesis after infection by symbiotic rhizobia. Probably not involved in arbuscular mycorrhizal (AM) symbiosis. Acts downstream of CCAMK. In Lotus japonicus (Lotus corniculatus var. japonicus), this protein is Ubiquitin-like domain-containing protein CIP73.